A 693-amino-acid polypeptide reads, in one-letter code: eEF1A lysine and N-terminal methyltransferase (693 aa).

Belongs to the methyltransferase superfamily.

It carries out the reaction L-lysyl-[protein] + S-adenosyl-L-methionine = N(6)-methyl-L-lysyl-[protein] + S-adenosyl-L-homocysteine + H(+). The enzyme catalyses N(6)-methyl-L-lysyl-[protein] + S-adenosyl-L-methionine = N(6),N(6)-dimethyl-L-lysyl-[protein] + S-adenosyl-L-homocysteine + H(+). The catalysed reaction is N-terminal glycyl-L-lysyl-L-glutamyl-[protein] + 3 S-adenosyl-L-methionine = N-terminal N,N,N-trimethyl-glycyl-L-lysyl-L-glutamyl-[protein] + 3 S-adenosyl-L-homocysteine + 3 H(+). Functionally, dual methyltransferase that catalyzes methylation of elongation factor 1-alpha (eef1a1 and eef1a2) at two different positions, and is therefore involved in the regulation of mRNA translation. Via its C-terminus, methylates the N-terminus of eef1a1 and eef1a2. Via its N-terminus dimethylates lysine residues of eef1a1 and eef1a2. This chain is eEF1A lysine and N-terminal methyltransferase (mettl13), found in Xenopus laevis (African clawed frog).